We begin with the raw amino-acid sequence, 234 residues long: tRNA (guanine-N(1)-)-methyltransferase (234 aa).

Residues glycine 115 and 135–140 (VGDYIL) each bind S-adenosyl-L-methionine.

It belongs to the RNA methyltransferase TrmD family. Homodimer.

The protein localises to the cytoplasm. It carries out the reaction guanosine(37) in tRNA + S-adenosyl-L-methionine = N(1)-methylguanosine(37) in tRNA + S-adenosyl-L-homocysteine + H(+). Functionally, specifically methylates guanosine-37 in various tRNAs. The sequence is that of tRNA (guanine-N(1)-)-methyltransferase from Rickettsia typhi (strain ATCC VR-144 / Wilmington).